The chain runs to 145 residues: Protein SPMIP3 (145 aa).

The protein is Protein SPMIP3 of Mus musculus (Mouse).